The chain runs to 457 residues: G-protein coupled receptor 135 (457 aa).

Residues 1-27 are disordered; it reads MEEQARPPSRPAASATLPGSAHPGGAA. Residues 1 to 64 are Extracellular-facing; that stretch reads MEEQARPPSR…EAAGSRGPAP (64 aa). Residue asparagine 47 is glycosylated (N-linked (GlcNAc...) asparagine). The chain crosses the membrane as a helical span at residues 65-85; sequence LLWHGAAVAAQALVLLLIFLL. Topologically, residues 86-109 are cytoplasmic; that stretch reads SSLGNCAVMGVIVKHRQLRTVTNA. A helical membrane pass occupies residues 110–130; it reads FILSLSLSDLLTALLCLPAAF. At 131 to 156 the chain is on the extracellular side; sequence LDLFAPPGDSGPWRSFCAASRFFSSC. Residues 157–177 traverse the membrane as a helical segment; that stretch reads FGIVSTFSVALISLDRYCAIV. Topologically, residues 178-189 are cytoplasmic; that stretch reads RPPRDKLGRRRA. Residues 190 to 210 traverse the membrane as a helical segment; that stretch reads LQLLAGAWLAALGFSLPWELL. Over 211–235 the chain is Extracellular; the sequence is RAPREPPTPQSFHRCLYRTSPDPAQ. The chain crosses the membrane as a helical span at residues 236–256; sequence LGAAYSVGLVVACYLLPFLLM. The Cytoplasmic segment spans residues 257 to 295; it reads CFCRYHICKTVRLSDVRVRPMTTYARVLRFFSEVRTATT. Residues 296–316 traverse the membrane as a helical segment; it reads VLIMIVFVICCWGPYCFLVLL. Residues 317–329 are Extracellular-facing; it reads AATRQGQTTQAPS. Residues 330–350 form a helical membrane-spanning segment; that stretch reads LLNVAAVWLTWANGAINPVIY. The Cytoplasmic segment spans residues 351–457; that stretch reads AIRNPNISMF…HKSETRDSSI (107 aa).

The protein belongs to the G-protein coupled receptor 1 family. As to quaternary structure, interacts with MTNR1B. Interacts with ARRB1 and ARRB2 in a spontaneous and agonist-independent manner; leading to the internalization of GPR135 in the endosomal compartment.

Its subcellular location is the cell membrane. It is found in the endosome membrane. In terms of biological role, orphan receptor. Has spontaneous activity for beta-arrestin recruitment. Shows a reciprocal regulatory interaction with the melatonin receptor MTNR1B most likely through receptor heteromerization. The polypeptide is G-protein coupled receptor 135 (Gpr135) (Rattus norvegicus (Rat)).